The chain runs to 573 residues: uncharacterized protein (573 aa).

Positions 15 to 298 constitute an ABC transmembrane type-1 domain; sequence AGIALILMLT…FPFLIMIFTR (284 aa). The next 6 membrane-spanning stretches (helical) occupy residues 17–37, 52–72, 127–147, 153–173, 238–258, and 275–295; these read IALILMLTELAVELMQPLLIA, VWIWGTVMIGLTVLSFAAGML, IFMSLRFMLRAPLMIAGGIVL, VKLGFFLLVTIPILILFLLWV, FTMPVLMLLMNLCILLILWAG, and IINYATRITGALSMFPFLIMI. The region spanning 330–563 is the ABC transporter domain; it reads IEFQHVSFRY…SQLYKRIYES (234 aa). An ATP-binding site is contributed by 364-371; that stretch reads GATGSGKS.

The protein belongs to the ABC transporter superfamily.

The protein resides in the cell membrane. This is an uncharacterized protein from Bacillus subtilis (strain 168).